The primary structure comprises 420 residues: Torsin-4A (420 aa).

The helical transmembrane segment at cysteine 130–aspartate 150 threads the bilayer. ATP is bound at residue glycine 202–serine 209.

The protein belongs to the ClpA/ClpB family. Torsin subfamily.

The protein resides in the membrane. This Xenopus tropicalis (Western clawed frog) protein is Torsin-4A (tor4a).